The primary structure comprises 1515 residues: Homeobox protein cut-like 1 (1515 aa).

The stretch at 56–361 (LLKSFQGEID…VKKELNTLKS (306 aa)) forms a coiled coil. Over residues 393-405 (ENATLRISNSDLS) the composition is skewed to polar residues. Disordered regions lie at residues 393 to 453 (ENAT…SPAG), 509 to 546 (PYSTNSISSPSPLQQSPDVNGMAPSPSQSESAGSISEG), 644 to 666 (PKRRNRSEGNITTRIRASETGSD), and 680 to 702 (LQVQKTAEPVQTSSTSSSGNSDD). The segment covering 422–432 (GPLPASPPPQL) has biased composition (pro residues). Position 427 is a phosphoserine (Ser-427). Over residues 436-447 (TGEQVSNTNGTH) the composition is skewed to polar residues. A compositionally biased stretch (low complexity) spans 514-544 (SISSPSPLQQSPDVNGMAPSPSQSESAGSIS). Residues 540–627 (AGSISEGEEI…ILALRSIQGR (88 aa)) constitute a DNA-binding region (CUT 1). A Phosphoserine modification is found at Ser-761. 2 disordered regions span residues 769 to 871 (PETS…SASA) and 884 to 923 (YSQSSELSLTGASRSETPQNSPLPSSPIVPMAKPAKPSVP). Glycyl lysine isopeptide (Lys-Gly) (interchain with G-Cter in SUMO2) cross-links involve residues Lys-783, Lys-809, and Lys-840. The segment covering 828–852 (PERRNLTSSEETKADETTASGKERA) has biased composition (basic and acidic residues). Polar residues-rich tracts occupy residues 853–868 (GSSQPRAERSQLQGPS) and 884–906 (YSQSSELSLTGASRSETPQNSPL). Phosphoserine is present on Ser-904. The CUT 2 DNA-binding region spans 929-1016 (QYEVYMYQEV…QGVLPVQGQQ (88 aa)). A compositionally biased stretch (polar residues) spans 1032 to 1044 (QQGCVSSESTPKT). Residues 1032–1105 (QQGCVSSEST…QPTTPLPLSG (74 aa)) are disordered. Low complexity predominate over residues 1045–1061 (SASCSPAPESPMSSSES). A phosphoserine mark is found at Ser-1054 and Ser-1064. Positions 1112–1199 (QELVAMSPEL…VEKLMDMKRM (88 aa)) form a DNA-binding region, CUT 3. Residues 1207-1242 (RRHSSVSDSQPCEPPSVGIDYSQGASPQPQHQLKKP) are disordered. Positions 1239–1298 (LKKPRVVLAPEEKEALKRAYQQKPYPSPKTIEELATQLNLKTSTVINWFHNYRSRIRREL) form a DNA-binding region, homeobox. Ser-1265 bears the Phosphoserine mark. Lys-1279 is covalently cross-linked (Glycyl lysine isopeptide (Lys-Gly) (interchain with G-Cter in SUMO2)). The tract at residues 1307-1488 (SQGQAGASDS…AGARDNPVRK (182 aa)) is disordered. Positions 1313–1328 (ASDSPSARSSRAAPSS) are enriched in low complexity. Acidic residues predominate over residues 1331-1343 (DSCDGVEATDAEE). Ser-1332 carries the phosphoserine modification. Basic and acidic residues predominate over residues 1365 to 1378 (ADREEATQPAEKAK). A compositionally biased stretch (low complexity) spans 1406 to 1468 (ADAPAPVPSL…ANAPARRPSS (63 aa)). 3 positions are modified to phosphoserine: Ser-1468, Ser-1496, and Ser-1506.

Belongs to the CUT homeobox family. In terms of assembly, interacts with BANP. Interacts with SATB1 (via DNA-binding domains); the interaction inhibits the attachment of both proteins to DNA. In terms of processing, phosphorylated by PKA. Post-translationally, as cells progress into S phase, a fraction of CUX1 molecules is proteolytically processed into N-terminally truncated proteins of 110 kDa by CTSL. Cell cycle-dependent processing of CUX1 serves to generate a CDP/Cux p110 with distinct DNA binding and transcriptional properties. In terms of tissue distribution, testis-specific where it is expressed in germ cells.

The protein localises to the nucleus. Functionally, transcription factor involved in the control of neuronal differentiation in the brain. Regulates dendrite development and branching, and dendritic spine formation in cortical layers II-III. Also involved in the control of synaptogenesis. In addition, it has probably a broad role in mammalian development as a repressor of developmentally regulated gene expression. May act by preventing binding of positively-activing CCAAT factors to promoters. Component of nf-munr repressor; binds to the matrix attachment regions (MARs) (5' and 3') of the immunoglobulin heavy chain enhancer. Represses T-cell receptor (TCR) beta enhancer function by binding to MARbeta, an ATC-rich DNA sequence located upstream of the TCR beta enhancer. Binds to the TH enhancer; may require the basic helix-loop-helix protein TCF4 as a coactivator. Its function is as follows. Plays a role in cell cycle progression, in particular at the G1/S transition. As cells progress into S phase, a fraction of CUX1 molecules is proteolytically processed into N-terminally truncated proteins of 110 kDa. While CUX1 only transiently binds to DNA and carries the CCAAT-displacement activity, CDP/Cux p110 makes a stable interaction with DNA and stimulates expression of genes such as POLA1. The sequence is that of Homeobox protein cut-like 1 from Mus musculus (Mouse).